The following is a 388-amino-acid chain: S-adenosylmethionine synthase 1 (388 aa).

Glutamate 11 serves as a coordination point for Mg(2+). Histidine 17 provides a ligand contact to ATP. Glutamate 45 is a K(+) binding site. L-methionine contacts are provided by glutamate 58 and glutamine 101. ATP-binding positions include 168–170 (DAK), 233–236 (SGRF), aspartate 244, 250–251 (RK), alanine 267, lysine 271, and lysine 275. Aspartate 244 lines the L-methionine pocket. Residue lysine 275 participates in L-methionine binding.

This sequence belongs to the AdoMet synthase family. As to quaternary structure, homotetramer. Mn(2+) is required as a cofactor. The cofactor is Mg(2+). Requires Co(2+) as cofactor. K(+) serves as cofactor. Mostly in Roots.

Its subcellular location is the cytoplasm. The enzyme catalyses L-methionine + ATP + H2O = S-adenosyl-L-methionine + phosphate + diphosphate. The protein operates within amino-acid biosynthesis; S-adenosyl-L-methionine biosynthesis; S-adenosyl-L-methionine from L-methionine: step 1/1. In terms of biological role, catalyzes the formation of S-adenosylmethionine from methionine and ATP. The reaction comprises two steps that are both catalyzed by the same enzyme: formation of S-adenosylmethionine (AdoMet) and triphosphate, and subsequent hydrolysis of the triphosphate. The sequence is that of S-adenosylmethionine synthase 1 (SAMS1) from Pinus contorta (Shore pine).